We begin with the raw amino-acid sequence, 117 residues long: Mitochondrial import inner membrane translocase subunit Tim10B (117 aa).

The Twin CX3C motif motif lies at 22–46 (CFSRCVDNLSQRDLGGHEDLCVDRC). Intrachain disulfides connect cysteine 22-cysteine 46 and cysteine 26-cysteine 42. Positions 75 to 97 (EMEENARKAEQQQREQEKERLKE) are enriched in basic and acidic residues. The segment at 75 to 117 (EMEENARKAEQQQREQEKERLKEAAATAVLTPVQPPVAGNLSM) is disordered.

The protein belongs to the small Tim family. In terms of assembly, component of the TIM22 complex, whose core is composed of Tim22, associated with peripheral protein Tim9b/Tim10b and the 70 kDa heterohexamer. In most cases, the 70 kDa complex is composed of TIMM9 and TIMM10.

It is found in the mitochondrion inner membrane. Its function is as follows. Component of the TIM22 complex, a complex that mediates the import and insertion of multi-pass transmembrane proteins into the mitochondrial inner membrane. The TIM22 complex forms a twin-pore translocase that uses the membrane potential as the external driving force. In the TIM22 complex, it may act as a docking point for the soluble 70 kDa complex that guides the target proteins in transit through the aqueous mitochondrial intermembrane space. The chain is Mitochondrial import inner membrane translocase subunit Tim10B (Tim9b) from Drosophila melanogaster (Fruit fly).